The sequence spans 144 residues: Large ribosomal subunit protein uL16 (144 aa).

Belongs to the universal ribosomal protein uL16 family. As to quaternary structure, part of the 50S ribosomal subunit.

Its function is as follows. Binds 23S rRNA and is also seen to make contacts with the A and possibly P site tRNAs. This chain is Large ribosomal subunit protein uL16, found in Latilactobacillus sakei subsp. sakei (strain 23K) (Lactobacillus sakei subsp. sakei).